The primary structure comprises 242 residues: Ferritin, mitochondrial (242 aa).

A mitochondrion-targeting transit peptide spans 1–49 (MLPCSLFLPKHISTSLVFLRSARHGFALLPRWVPRLSSDYPPAAPIRLL). The 150-residue stretch at 70 to 219 (QNFHPDSEAA…DHVNNLVKMG (150 aa)) folds into the Ferritin-like diiron domain. Fe cation is bound by residues glutamate 87, glutamate 122, histidine 125, glutamate 167, and glutamine 201.

This sequence belongs to the ferritin family. As to quaternary structure, homooligomer of 24 subunits. The functional molecule is roughly spherical and contains a central cavity into which the polymeric mineral iron core is deposited.

It is found in the mitochondrion. It carries out the reaction 4 Fe(2+) + O2 + 4 H(+) = 4 Fe(3+) + 2 H2O. Catalyzes the oxidation of ferrous iron(II) to ferric iron(III) and stores iron in a soluble, non-toxic, readily available form. Important for iron homeostasis. Iron is taken up in the ferrous form and deposited as ferric hydroxides after oxidation. The chain is Ferritin, mitochondrial from Bos taurus (Bovine).